A 173-amino-acid chain; its full sequence is NEDD4-binding protein 2-like 1 (173 aa).

The tract at residues 1–35 is disordered; sequence MEESFLESFGRLSLRQQQPPPPRPPAPPPLRGTPP. The segment covering 18 to 32 has biased composition (pro residues); the sequence is QPPPPRPPAPPPLRG.

Interacts with dynactin subunit proteins, including DCTN4, DCTN5 and DCTN5.

Its function is as follows. Might play a role in adipocyte differentiation and triglyceride accumulation. The polypeptide is NEDD4-binding protein 2-like 1 (N4BP2L1) (Bos taurus (Bovine)).